The following is a 144-amino-acid chain: MRLNTLSPAEGSKHASKRPGRGIGSGLGKTGGRGHKGQKSRSGGGVRRGFEGGQMPLYRRLPKFGFTSRKSMVTAEIRLSDLAHVEGDVVDLNTLKAANIVGIQTEFAKIMLSGEVKRAVTIRGLRVSKGARAAIEAAGGKIEE.

The interval 1–53 (MRLNTLSPAEGSKHASKRPGRGIGSGLGKTGGRGHKGQKSRSGGGVRRGFEGG) is disordered. Residues 21–31 (RGIGSGLGKTG) are compositionally biased toward gly residues.

The protein belongs to the universal ribosomal protein uL15 family. Part of the 50S ribosomal subunit.

Functionally, binds to the 23S rRNA. The polypeptide is Large ribosomal subunit protein uL15 (Sodalis glossinidius (strain morsitans)).